The following is a 234-amino-acid chain: tRNA1(Val) (adenine(37)-N6)-methyltransferase (234 aa).

It belongs to the methyltransferase superfamily. tRNA (adenine-N(6)-)-methyltransferase family.

The protein localises to the cytoplasm. The catalysed reaction is adenosine(37) in tRNA1(Val) + S-adenosyl-L-methionine = N(6)-methyladenosine(37) in tRNA1(Val) + S-adenosyl-L-homocysteine + H(+). In terms of biological role, specifically methylates the adenine in position 37 of tRNA(1)(Val) (anticodon cmo5UAC). The chain is tRNA1(Val) (adenine(37)-N6)-methyltransferase from Pedobacter heparinus (strain ATCC 13125 / DSM 2366 / CIP 104194 / JCM 7457 / NBRC 12017 / NCIMB 9290 / NRRL B-14731 / HIM 762-3).